The following is a 227-amino-acid chain: MKFLANLKCNHTRASFREYAKILDENLSANDDVSVFAPASAFDEKKHMFRLGAQNFYPCESGAFTGEIGKAMLDEFEIKDVLIGHSERREILNESEEFLRSKFDFAAKNGWNVIYCIGENLSTNESGATKEFLSRQLENIDLGYKNLVIAYEPIWAIGTGRSASIEQIDEVLSFLKTKANVPLLYGGSVNAANIADIAGIKSCDGVLVGTASWDANNFLGLIGAASR.

6-8 (NLK) contributes to the substrate binding site. His-85 functions as the Electrophile in the catalytic mechanism. Glu-152 serves as the catalytic Proton acceptor. Substrate-binding residues include Gly-158 and Ser-188.

The protein belongs to the triosephosphate isomerase family. Homodimer.

The protein resides in the cytoplasm. It carries out the reaction D-glyceraldehyde 3-phosphate = dihydroxyacetone phosphate. The protein operates within carbohydrate biosynthesis; gluconeogenesis. It participates in carbohydrate degradation; glycolysis; D-glyceraldehyde 3-phosphate from glycerone phosphate: step 1/1. In terms of biological role, involved in the gluconeogenesis. Catalyzes stereospecifically the conversion of dihydroxyacetone phosphate (DHAP) to D-glyceraldehyde-3-phosphate (G3P). In Campylobacter concisus (strain 13826), this protein is Triosephosphate isomerase.